The chain runs to 295 residues: Ribosomal RNA small subunit methyltransferase A (295 aa).

S-adenosyl-L-methionine is bound by residues asparagine 29, leucine 31, glycine 56, glutamate 77, aspartate 102, and asparagine 128.

This sequence belongs to the class I-like SAM-binding methyltransferase superfamily. rRNA adenine N(6)-methyltransferase family. RsmA subfamily.

The protein resides in the cytoplasm. It carries out the reaction adenosine(1518)/adenosine(1519) in 16S rRNA + 4 S-adenosyl-L-methionine = N(6)-dimethyladenosine(1518)/N(6)-dimethyladenosine(1519) in 16S rRNA + 4 S-adenosyl-L-homocysteine + 4 H(+). Functionally, specifically dimethylates two adjacent adenosines (A1518 and A1519) in the loop of a conserved hairpin near the 3'-end of 16S rRNA in the 30S particle. May play a critical role in biogenesis of 30S subunits. The protein is Ribosomal RNA small subunit methyltransferase A of Listeria welshimeri serovar 6b (strain ATCC 35897 / DSM 20650 / CCUG 15529 / CIP 8149 / NCTC 11857 / SLCC 5334 / V8).